A 37-amino-acid polypeptide reads, in one-letter code: Large ribosomal subunit protein bL36 (37 aa).

It belongs to the bacterial ribosomal protein bL36 family.

The chain is Large ribosomal subunit protein bL36 from Hydrogenobaculum sp. (strain Y04AAS1).